Here is a 338-residue protein sequence, read N- to C-terminus: MTIRIAINGFGRIGRSVLRALYESGRRAEITVVAINELASAEGMAHLLKYDSSHGRFSWDVRQECDQLYVGDDDIRLLHQVEIQQLPWRELSVDIVLDCSGVYGSREDGEAHLAAGAKKVLFSHPGTTDLDATVVFGVNHDRLESGHRIVSNASCTTNCIIPVIKLLDDAFGIENGTVTTIHSSMNDQPVIDAYHHDLRRTRAASQSIIPVDTKLSAGITRIFPQFVDRFEAISVRVPTINVTAIDLSVSVRKAVNVNEINALLQKSAHESFRGIVDYTELPLVSADFNHDPHSAIVDGTQTRVSGQHLIKTLVWCDNEWGFANRMLDTTRAMAACGF.

12 to 13 serves as a coordination point for NAD(+); sequence RI. Substrate contacts are provided by residues 154-156, Arg-200, 213-214, and Arg-236; these read SCT and TK. Cys-155 acts as the Nucleophile in catalysis. Residue Asn-318 coordinates NAD(+).

It belongs to the glyceraldehyde-3-phosphate dehydrogenase family. Epd subfamily. Homotetramer.

The protein resides in the cytoplasm. It catalyses the reaction D-erythrose 4-phosphate + NAD(+) + H2O = 4-phospho-D-erythronate + NADH + 2 H(+). It functions in the pathway cofactor biosynthesis; pyridoxine 5'-phosphate biosynthesis; pyridoxine 5'-phosphate from D-erythrose 4-phosphate: step 1/5. Catalyzes the NAD-dependent conversion of D-erythrose 4-phosphate to 4-phosphoerythronate. In Pectobacterium atrosepticum (strain SCRI 1043 / ATCC BAA-672) (Erwinia carotovora subsp. atroseptica), this protein is D-erythrose-4-phosphate dehydrogenase.